Reading from the N-terminus, the 184-residue chain is Gastrokine-2 (184 aa).

The signal sequence occupies residues 1 to 20 (MKPLVAFLVVLSIFGIQSQA). Residues 54–151 (HSGSCSSTTI…LCKHMPLYEG (98 aa)) enclose the BRICHOS domain. A disulfide bond links Cys81 and Cys143.

In terms of assembly, heterodimer with TFF1; disulfide linked. Interacts with TFF2. As to expression, stomach foveolar epithelium and duodenal Brunner's glands.

Its subcellular location is the secreted. It localises to the golgi apparatus. The protein is Gastrokine-2 (Gkn2) of Mus musculus (Mouse).